Here is a 386-residue protein sequence, read N- to C-terminus: Inactive GDSL esterase/lipase-like protein 23 (386 aa).

A signal peptide spans 1-29; it reads MMAKNCNLVSVLCVFLVLTLFNKPITVAG. Catalysis depends on S43, which acts as the Nucleophile. N-linked (GlcNAc...) asparagine glycosylation is found at N105, N165, and N288. Catalysis depends on residues D322 and H325.

The protein belongs to the 'GDSL' lipolytic enzyme family. As to quaternary structure, part of the PYK10 complex. Interacts with MVP1. As to expression, expressed mainly in roots.

It localises to the endoplasmic reticulum. Functionally, involved in the control of the PYK10 complex size and possibly substrate specificity. May be exported from the endoplasmic reticulum upon interaction with MVP1. This is Inactive GDSL esterase/lipase-like protein 23 (GLL23) from Arabidopsis thaliana (Mouse-ear cress).